The sequence spans 214 residues: Attacin (214 aa).

Residues 1-19 (MSKSVALLLLCACLASGRH) form the signal peptide. Positions 20–26 (VPTRARR) are excised as a propeptide.

Belongs to the attacin/sarcotoxin-2 family. In terms of tissue distribution, highest expression in fat body and hemocytes and to a much lesser extent in Malpighian tubules, silk gland and midgut.

It localises to the secreted. In terms of biological role, hemolymph antibacterial protein. Has a wide spectrum of activity against both Gram-positive and Gram-negative bacteria. The protein is Attacin of Bombyx mori (Silk moth).